Consider the following 451-residue polypeptide: Proline--tRNA ligase (451 aa).

Belongs to the class-II aminoacyl-tRNA synthetase family. ProS type 2 subfamily. As to quaternary structure, homodimer.

Its subcellular location is the cytoplasm. The catalysed reaction is tRNA(Pro) + L-proline + ATP = L-prolyl-tRNA(Pro) + AMP + diphosphate. In terms of biological role, catalyzes the attachment of proline to tRNA(Pro) in a two-step reaction: proline is first activated by ATP to form Pro-AMP and then transferred to the acceptor end of tRNA(Pro). This chain is Proline--tRNA ligase, found in Ruegeria sp. (strain TM1040) (Silicibacter sp.).